The following is a 103-amino-acid chain: Large ribosomal subunit protein bL21 (103 aa).

Belongs to the bacterial ribosomal protein bL21 family. Part of the 50S ribosomal subunit. Contacts protein L20.

Its function is as follows. This protein binds to 23S rRNA in the presence of protein L20. The chain is Large ribosomal subunit protein bL21 from Haemophilus ducreyi (strain 35000HP / ATCC 700724).